The chain runs to 109 residues: Putative double-stranded DNA mimic protein plu2488 (109 aa).

It belongs to the putative dsDNA mimic protein family.

In terms of biological role, may act as a double-stranded DNA (dsDNA) mimic. Probably regulates the activity of a dsDNA-binding protein. This chain is Putative double-stranded DNA mimic protein plu2488, found in Photorhabdus laumondii subsp. laumondii (strain DSM 15139 / CIP 105565 / TT01) (Photorhabdus luminescens subsp. laumondii).